Here is a 97-residue protein sequence, read N- to C-terminus: Co-chaperonin GroES (97 aa).

The protein belongs to the GroES chaperonin family. In terms of assembly, heptamer of 7 subunits arranged in a ring. Interacts with the chaperonin GroEL.

It is found in the cytoplasm. Together with the chaperonin GroEL, plays an essential role in assisting protein folding. The GroEL-GroES system forms a nano-cage that allows encapsulation of the non-native substrate proteins and provides a physical environment optimized to promote and accelerate protein folding. GroES binds to the apical surface of the GroEL ring, thereby capping the opening of the GroEL channel. In Nocardioides sp. (strain ATCC BAA-499 / JS614), this protein is Co-chaperonin GroES.